The chain runs to 596 residues: Elongation factor 4 (596 aa).

The region spanning 2–184 (KHIRNFSIIA…VIVAQIPSPE (183 aa)) is the tr-type G domain. Residues 14–19 (DHGKST) and 131–134 (NKID) each bind GTP.

It belongs to the TRAFAC class translation factor GTPase superfamily. Classic translation factor GTPase family. LepA subfamily.

Its subcellular location is the cell inner membrane. The catalysed reaction is GTP + H2O = GDP + phosphate + H(+). Functionally, required for accurate and efficient protein synthesis under certain stress conditions. May act as a fidelity factor of the translation reaction, by catalyzing a one-codon backward translocation of tRNAs on improperly translocated ribosomes. Back-translocation proceeds from a post-translocation (POST) complex to a pre-translocation (PRE) complex, thus giving elongation factor G a second chance to translocate the tRNAs correctly. Binds to ribosomes in a GTP-dependent manner. In Shewanella sediminis (strain HAW-EB3), this protein is Elongation factor 4.